Here is a 189-residue protein sequence, read N- to C-terminus: Movement protein p22 (189 aa).

It belongs to the tombusvirus/aureusvirus movement protein p22 family. In terms of assembly, interacts with host protein HFI22. Phosphorylated.

The protein resides in the host membrane. In terms of biological role, cell-to-cell movement. Displays RNA-binding activity. The chain is Movement protein p22 from Capsicum annuum (Capsicum pepper).